Here is a 244-residue protein sequence, read N- to C-terminus: 23S rRNA (guanosine-2'-O-)-methyltransferase RlmB (244 aa).

Residues G196, I216, and L225 each contribute to the S-adenosyl-L-methionine site.

The protein belongs to the class IV-like SAM-binding methyltransferase superfamily. RNA methyltransferase TrmH family. RlmB subfamily. Homodimer.

It localises to the cytoplasm. The catalysed reaction is guanosine(2251) in 23S rRNA + S-adenosyl-L-methionine = 2'-O-methylguanosine(2251) in 23S rRNA + S-adenosyl-L-homocysteine + H(+). Specifically methylates the ribose of guanosine 2251 in 23S rRNA. The protein is 23S rRNA (guanosine-2'-O-)-methyltransferase RlmB of Photorhabdus laumondii subsp. laumondii (strain DSM 15139 / CIP 105565 / TT01) (Photorhabdus luminescens subsp. laumondii).